An 85-amino-acid polypeptide reads, in one-letter code: Toxin Cll5c* (85 aa).

The N-terminal stretch at 1–17 (MNSLLIITACLVLFVWA) is a signal peptide. The LCN-type CS-alpha/beta domain maps to 18 to 83 (KEGYLVNKST…TYPLPNKSCS (66 aa)). 4 disulfide bridges follow: C29/C82, C33/C58, C42/C63, and C46/C65. A propeptide spans 84-85 (KK) (removed by a carboxypeptidase).

This sequence belongs to the long (4 C-C) scorpion toxin superfamily. Sodium channel inhibitor family. Beta subfamily. As to expression, expressed by the venom gland.

Its subcellular location is the secreted. Beta toxins bind voltage-independently at site-4 of sodium channels (Nav) and shift the voltage of activation toward more negative potentials thereby affecting sodium channel activation and promoting spontaneous and repetitive firing. This Centruroides limpidus (Mexican scorpion) protein is Toxin Cll5c*.